A 407-amino-acid chain; its full sequence is Argininosuccinate synthase (407 aa).

ATP contacts are provided by residues 16-24 (AYSGGLDTS) and alanine 44. The L-citrulline site is built by tyrosine 96 and serine 101. Glycine 126 contacts ATP. Positions 128, 132, and 133 each coordinate L-aspartate. Asparagine 132 is a binding site for L-citrulline. L-citrulline contacts are provided by arginine 136, serine 185, serine 194, glutamate 270, and tyrosine 282.

Belongs to the argininosuccinate synthase family. Type 1 subfamily. As to quaternary structure, homotetramer.

It localises to the cytoplasm. It catalyses the reaction L-citrulline + L-aspartate + ATP = 2-(N(omega)-L-arginino)succinate + AMP + diphosphate + H(+). The protein operates within amino-acid biosynthesis; L-arginine biosynthesis; L-arginine from L-ornithine and carbamoyl phosphate: step 2/3. This chain is Argininosuccinate synthase, found in Shewanella sp. (strain W3-18-1).